The following is a 666-amino-acid chain: Chaperone protein HtpG (666 aa).

Residues 1–374 (MSELNPVDNQ…SADLPLNVSR (374 aa)) form an a; substrate-binding region. Residues 375–593 (ELLQESRDVK…EGELSPQMIQ (219 aa)) form a b region. A c region spans residues 594-666 (MLKQMGQDVP…LRRVNELLMR (73 aa)).

The protein belongs to the heat shock protein 90 family. As to quaternary structure, homodimer.

It localises to the cytoplasm. Its function is as follows. Molecular chaperone. Has ATPase activity. This is Chaperone protein HtpG from Psychrobacter cryohalolentis (strain ATCC BAA-1226 / DSM 17306 / VKM B-2378 / K5).